Reading from the N-terminus, the 461-residue chain is Peptidyl-prolyl cis-trans isomerase-like 4 (461 aa).

Positions 1–171 (MSVLLETSLG…KDIRIRHTVI (171 aa)) constitute a PPIase cyclophilin-type domain. In terms of domain architecture, RRM spans 248-326 (NVLFVCKLNP…HRIHVDFSQS (79 aa)). The disordered stretch occupies residues 372–461 (NYNMVFDKND…DDRYRDRRRR (90 aa)). 2 stretches are compositionally biased toward basic and acidic residues: residues 378 to 392 (DKND…ERSY) and 400 to 461 (NYRD…RRRR).

This sequence belongs to the cyclophilin-type PPIase family. PPIL4 subfamily.

The protein resides in the nucleus. It carries out the reaction [protein]-peptidylproline (omega=180) = [protein]-peptidylproline (omega=0). In terms of biological role, PPIases accelerate the folding of proteins. It catalyzes the cis-trans isomerization of proline imidic peptide bonds in oligopeptides. The polypeptide is Peptidyl-prolyl cis-trans isomerase-like 4 (cyp6) (Emericella nidulans (strain FGSC A4 / ATCC 38163 / CBS 112.46 / NRRL 194 / M139) (Aspergillus nidulans)).